A 901-amino-acid polypeptide reads, in one-letter code: Protein translocase subunit SecA (901 aa).

Residues Gln87, Gly105–Thr109, and Asp512 each bind ATP. Zn(2+) contacts are provided by Cys885, Cys887, Cys896, and His897.

It belongs to the SecA family. As to quaternary structure, monomer and homodimer. Part of the essential Sec protein translocation apparatus which comprises SecA, SecYEG and auxiliary proteins SecDF-YajC and YidC. The cofactor is Zn(2+).

It is found in the cell inner membrane. The protein resides in the cytoplasm. The catalysed reaction is ATP + H2O + cellular proteinSide 1 = ADP + phosphate + cellular proteinSide 2.. Its function is as follows. Part of the Sec protein translocase complex. Interacts with the SecYEG preprotein conducting channel. Has a central role in coupling the hydrolysis of ATP to the transfer of proteins into and across the cell membrane, serving both as a receptor for the preprotein-SecB complex and as an ATP-driven molecular motor driving the stepwise translocation of polypeptide chains across the membrane. This Salmonella typhi protein is Protein translocase subunit SecA.